A 264-amino-acid polypeptide reads, in one-letter code: uncharacterized protein (264 aa).

3 helical membrane passes run 48–68 (LTIT…LLVF), 112–132 (ITPS…FLLA), and 142–162 (LPIA…SYLI). Ser-260 carries the phosphoserine modification.

Its subcellular location is the membrane. This is an uncharacterized protein from Schizosaccharomyces pombe (strain 972 / ATCC 24843) (Fission yeast).